Consider the following 185-residue polypeptide: Elongation factor P (185 aa).

Belongs to the elongation factor P family.

The protein localises to the cytoplasm. It participates in protein biosynthesis; polypeptide chain elongation. In terms of biological role, involved in peptide bond synthesis. Stimulates efficient translation and peptide-bond synthesis on native or reconstituted 70S ribosomes in vitro. Probably functions indirectly by altering the affinity of the ribosome for aminoacyl-tRNA, thus increasing their reactivity as acceptors for peptidyl transferase. The chain is Elongation factor P from Mesomycoplasma hyopneumoniae (strain 7448) (Mycoplasma hyopneumoniae).